The chain runs to 68 residues: UPF0253 protein VF_0662 (68 aa).

Belongs to the UPF0253 family.

In Aliivibrio fischeri (strain ATCC 700601 / ES114) (Vibrio fischeri), this protein is UPF0253 protein VF_0662.